A 360-amino-acid chain; its full sequence is Histidinol-phosphate aminotransferase (360 aa).

Lys-223 carries the post-translational modification N6-(pyridoxal phosphate)lysine.

The protein belongs to the class-II pyridoxal-phosphate-dependent aminotransferase family. Histidinol-phosphate aminotransferase subfamily. In terms of assembly, homodimer. It depends on pyridoxal 5'-phosphate as a cofactor.

It carries out the reaction L-histidinol phosphate + 2-oxoglutarate = 3-(imidazol-4-yl)-2-oxopropyl phosphate + L-glutamate. It participates in amino-acid biosynthesis; L-histidine biosynthesis; L-histidine from 5-phospho-alpha-D-ribose 1-diphosphate: step 7/9. This Bacillus velezensis (strain DSM 23117 / BGSC 10A6 / LMG 26770 / FZB42) (Bacillus amyloliquefaciens subsp. plantarum) protein is Histidinol-phosphate aminotransferase.